Consider the following 151-residue polypeptide: 3-hydroxyacyl-[acyl-carrier-protein] dehydratase FabZ (151 aa).

The active site involves H57.

This sequence belongs to the thioester dehydratase family. FabZ subfamily.

It is found in the cytoplasm. The catalysed reaction is a (3R)-hydroxyacyl-[ACP] = a (2E)-enoyl-[ACP] + H2O. In terms of biological role, involved in unsaturated fatty acids biosynthesis. Catalyzes the dehydration of short chain beta-hydroxyacyl-ACPs and long chain saturated and unsaturated beta-hydroxyacyl-ACPs. This is 3-hydroxyacyl-[acyl-carrier-protein] dehydratase FabZ from Prochlorococcus marinus (strain SARG / CCMP1375 / SS120).